An 820-amino-acid polypeptide reads, in one-letter code: Phospholipase D alpha 3 (820 aa).

The C2 domain occupies M1–L133. Residue D194 participates in Ca(2+) binding. Positions T334 to R371 constitute a PLD phosphodiesterase 1 domain. Active-site residues include H339, K341, and D346. An a 1,2-diacyl-sn-glycero-3-phosphate-binding site is contributed by H339. 2 residues coordinate Ca(2+): H377 and H411. Residues Q528 and H667 each contribute to the a 1,2-diacyl-sn-glycero-3-phosphate site. The PLD phosphodiesterase 2 domain occupies F662–S689. Residues H667, K669, and D674 contribute to the active site. E730 serves as a coordination point for Ca(2+).

This sequence belongs to the phospholipase D family. C2-PLD subfamily. Requires Ca(2+) as cofactor. In terms of tissue distribution, expressed in buds, flowers, siliques, stems, old leaves and roots. Expressed in the sieve elements.

Its subcellular location is the cytoplasm. The protein localises to the membrane. It carries out the reaction a 1,2-diacyl-sn-glycero-3-phosphocholine + H2O = a 1,2-diacyl-sn-glycero-3-phosphate + choline + H(+). Functionally, hydrolyzes glycerol-phospholipids at the terminal phosphodiesteric bond to generate phosphatidic acids (PA). Active with phosphatidylcholine (PC), phosphatidylethanolamine (PE), phosphatidylglycerol (PG), and phosphatidylserine (PS) as substrates. No activity toward phosphatidylinositol (PI) or PIP2. Positively mediates plant responses to hyperosmotic stresses and promotes root growth, flowering, and stress avoidance. Not involved in the abscisic acid regulation of stomatal movement and transpirational water loss. This is Phospholipase D alpha 3 from Arabidopsis thaliana (Mouse-ear cress).